The primary structure comprises 541 residues: Glucose-6-phosphate isomerase (541 aa).

Catalysis depends on glutamate 354, which acts as the Proton donor. Active-site residues include histidine 385 and lysine 505.

It belongs to the GPI family.

It is found in the cytoplasm. The catalysed reaction is alpha-D-glucose 6-phosphate = beta-D-fructose 6-phosphate. It participates in carbohydrate biosynthesis; gluconeogenesis. It functions in the pathway carbohydrate degradation; glycolysis; D-glyceraldehyde 3-phosphate and glycerone phosphate from D-glucose: step 2/4. Catalyzes the reversible isomerization of glucose-6-phosphate to fructose-6-phosphate. The polypeptide is Glucose-6-phosphate isomerase (Cupriavidus metallidurans (strain ATCC 43123 / DSM 2839 / NBRC 102507 / CH34) (Ralstonia metallidurans)).